Here is a 194-residue protein sequence, read N- to C-terminus: dITP/XTP pyrophosphatase (194 aa).

A substrate-binding site is contributed by 8 to 13 (TSNPGK). Mg(2+) contacts are provided by Glu-38 and Asp-67. The Proton acceptor role is filled by Asp-67. Substrate contacts are provided by residues Ser-68, 152 to 155 (FGYD), Lys-175, and 180 to 181 (HR).

The protein belongs to the HAM1 NTPase family. Homodimer. Requires Mg(2+) as cofactor.

The enzyme catalyses XTP + H2O = XMP + diphosphate + H(+). It carries out the reaction dITP + H2O = dIMP + diphosphate + H(+). It catalyses the reaction ITP + H2O = IMP + diphosphate + H(+). Pyrophosphatase that catalyzes the hydrolysis of nucleoside triphosphates to their monophosphate derivatives, with a high preference for the non-canonical purine nucleotides XTP (xanthosine triphosphate), dITP (deoxyinosine triphosphate) and ITP. Seems to function as a house-cleaning enzyme that removes non-canonical purine nucleotides from the nucleotide pool, thus preventing their incorporation into DNA/RNA and avoiding chromosomal lesions. This is dITP/XTP pyrophosphatase from Legionella pneumophila (strain Lens).